Reading from the N-terminus, the 165-residue chain is MPSTFSGDETAPFFGFLGAAAALVFSCMGAAYGTAKSGVGVASMGVMRPELVMKSIVPVVMAGVLGIYGLIIAVIISTGINPKTKSYYLFDGYAHLSSGLACGLAGLSAGMAIGIVGDAGVRANAQQPKLFVGMILILIFAEALALYGLIVGIILSSRAGQSRAE.

Over 1–10 (MPSTFSGDET) the chain is Lumenal. The chain crosses the membrane as a helical span at residues 11-33 (APFFGFLGAAAALVFSCMGAAYG). Residues 34–55 (TAKSGVGVASMGVMRPELVMKS) are Cytoplasmic-facing. The helical transmembrane segment at 56–76 (IVPVVMAGVLGIYGLIIAVII) threads the bilayer. Over 77–95 (STGINPKTKSYYLFDGYAH) the chain is Lumenal. A helical membrane pass occupies residues 96 to 117 (LSSGLACGLAGLSAGMAIGIVG). Residues 118–129 (DAGVRANAQQPK) are Cytoplasmic-facing. A helical transmembrane segment spans residues 130–155 (LFVGMILILIFAEALALYGLIVGIIL). Topologically, residues 156–165 (SSRAGQSRAE) are lumenal.

It belongs to the V-ATPase proteolipid subunit family. V-ATPase is a heteromultimeric enzyme composed of a peripheral catalytic V1 complex (main components: subunits A, B, C, D, E, and F) attached to an integral membrane V0 proton pore complex (main component: the proteolipid protein; which is present as a hexamer that forms the proton-conducting pore).

The protein resides in the vacuole membrane. Functionally, proton-conducting pore forming subunit of the membrane integral V0 complex of vacuolar ATPase. V-ATPase is responsible for acidifying a variety of intracellular compartments in eukaryotic cells. The chain is V-type proton ATPase 16 kDa proteolipid subunit from Nicotiana tabacum (Common tobacco).